We begin with the raw amino-acid sequence, 472 residues long: Cysteine--tRNA ligase (472 aa).

C29 provides a ligand contact to Zn(2+). Residues 31–41 (PTVYNYIHIGN) carry the 'HIGH' region motif. C214, H239, and E243 together coordinate Zn(2+). Positions 273-277 (KMSKS) match the 'KMSKS' region motif. K276 is an ATP binding site.

The protein belongs to the class-I aminoacyl-tRNA synthetase family. As to quaternary structure, monomer. Requires Zn(2+) as cofactor.

The protein localises to the cytoplasm. The enzyme catalyses tRNA(Cys) + L-cysteine + ATP = L-cysteinyl-tRNA(Cys) + AMP + diphosphate. The polypeptide is Cysteine--tRNA ligase (Lactobacillus gasseri (strain ATCC 33323 / DSM 20243 / BCRC 14619 / CIP 102991 / JCM 1131 / KCTC 3163 / NCIMB 11718 / NCTC 13722 / AM63)).